The primary structure comprises 180 residues: NADH-quinone oxidoreductase subunit I (180 aa).

4Fe-4S ferredoxin-type domains are found at residues 48 to 80 and 90 to 119; these read IVLT…LQKS and EFFR…LTPD. Residues C60, C63, C66, C70, C99, C102, C105, and C109 each coordinate [4Fe-4S] cluster. Positions 161–174 are enriched in basic and acidic residues; sequence KPKGDAENEAKPID. The disordered stretch occupies residues 161–180; sequence KPKGDAENEAKPIDVKSLLP.

The protein belongs to the complex I 23 kDa subunit family. NDH-1 is composed of 13 different subunits. Subunits NuoA, H, J, K, L, M, N constitute the membrane sector of the complex. It depends on [4Fe-4S] cluster as a cofactor.

Its subcellular location is the cell inner membrane. The enzyme catalyses a quinone + NADH + 5 H(+)(in) = a quinol + NAD(+) + 4 H(+)(out). Its function is as follows. NDH-1 shuttles electrons from NADH, via FMN and iron-sulfur (Fe-S) centers, to quinones in the respiratory chain. The immediate electron acceptor for the enzyme in this species is believed to be ubiquinone. Couples the redox reaction to proton translocation (for every two electrons transferred, four hydrogen ions are translocated across the cytoplasmic membrane), and thus conserves the redox energy in a proton gradient. This chain is NADH-quinone oxidoreductase subunit I, found in Shewanella oneidensis (strain ATCC 700550 / JCM 31522 / CIP 106686 / LMG 19005 / NCIMB 14063 / MR-1).